A 360-amino-acid polypeptide reads, in one-letter code: Phosphoserine aminotransferase (360 aa).

Arg-42 is an L-glutamate binding site. Pyridoxal 5'-phosphate is bound by residues Trp-102, Thr-152, Asp-171, and Gln-194. Lys-195 is subject to N6-(pyridoxal phosphate)lysine. Pyridoxal 5'-phosphate is bound at residue 237–238; sequence NT.

It belongs to the class-V pyridoxal-phosphate-dependent aminotransferase family. SerC subfamily. Homodimer. Pyridoxal 5'-phosphate serves as cofactor.

It is found in the cytoplasm. The catalysed reaction is O-phospho-L-serine + 2-oxoglutarate = 3-phosphooxypyruvate + L-glutamate. It catalyses the reaction 4-(phosphooxy)-L-threonine + 2-oxoglutarate = (R)-3-hydroxy-2-oxo-4-phosphooxybutanoate + L-glutamate. It participates in amino-acid biosynthesis; L-serine biosynthesis; L-serine from 3-phospho-D-glycerate: step 2/3. Its pathway is cofactor biosynthesis; pyridoxine 5'-phosphate biosynthesis; pyridoxine 5'-phosphate from D-erythrose 4-phosphate: step 3/5. Functionally, catalyzes the reversible conversion of 3-phosphohydroxypyruvate to phosphoserine and of 3-hydroxy-2-oxo-4-phosphonooxybutanoate to phosphohydroxythreonine. The chain is Phosphoserine aminotransferase from Coxiella burnetii (strain CbuG_Q212) (Coxiella burnetii (strain Q212)).